A 174-amino-acid polypeptide reads, in one-letter code: Crossover junction endodeoxyribonuclease RuvC (174 aa).

Residues aspartate 8, glutamate 69, and aspartate 141 contribute to the active site. The Mg(2+) site is built by aspartate 8, glutamate 69, and aspartate 141.

This sequence belongs to the RuvC family. Homodimer which binds Holliday junction (HJ) DNA. The HJ becomes 2-fold symmetrical on binding to RuvC with unstacked arms; it has a different conformation from HJ DNA in complex with RuvA. In the full resolvosome a probable DNA-RuvA(4)-RuvB(12)-RuvC(2) complex forms which resolves the HJ. The cofactor is Mg(2+).

It localises to the cytoplasm. It carries out the reaction Endonucleolytic cleavage at a junction such as a reciprocal single-stranded crossover between two homologous DNA duplexes (Holliday junction).. In terms of biological role, the RuvA-RuvB-RuvC complex processes Holliday junction (HJ) DNA during genetic recombination and DNA repair. Endonuclease that resolves HJ intermediates. Cleaves cruciform DNA by making single-stranded nicks across the HJ at symmetrical positions within the homologous arms, yielding a 5'-phosphate and a 3'-hydroxyl group; requires a central core of homology in the junction. The consensus cleavage sequence is 5'-(A/T)TT(C/G)-3'. Cleavage occurs on the 3'-side of the TT dinucleotide at the point of strand exchange. HJ branch migration catalyzed by RuvA-RuvB allows RuvC to scan DNA until it finds its consensus sequence, where it cleaves and resolves the cruciform DNA. This chain is Crossover junction endodeoxyribonuclease RuvC, found in Xanthomonas euvesicatoria pv. vesicatoria (strain 85-10) (Xanthomonas campestris pv. vesicatoria).